The following is a 338-amino-acid chain: Ketol-acid reductoisomerase (NADP(+)) (338 aa).

The KARI N-terminal Rossmann domain occupies 1-181 (MKVFYDKDAD…GGGRAGIIET (181 aa)). Residues 24-27 (YGSQ), Arg-47, and Ser-52 each bind NADP(+). His-107 is an active-site residue. Gly-133 contacts NADP(+). The 146-residue stretch at 182–327 (NFREETETDL…AKLRSMMPWI (146 aa)) folds into the KARI C-terminal knotted domain. Residues Asp-190, Glu-194, Glu-226, and Glu-230 each contribute to the Mg(2+) site. Ser-251 provides a ligand contact to substrate.

Belongs to the ketol-acid reductoisomerase family. The cofactor is Mg(2+).

The enzyme catalyses (2R)-2,3-dihydroxy-3-methylbutanoate + NADP(+) = (2S)-2-acetolactate + NADPH + H(+). The catalysed reaction is (2R,3R)-2,3-dihydroxy-3-methylpentanoate + NADP(+) = (S)-2-ethyl-2-hydroxy-3-oxobutanoate + NADPH + H(+). It functions in the pathway amino-acid biosynthesis; L-isoleucine biosynthesis; L-isoleucine from 2-oxobutanoate: step 2/4. The protein operates within amino-acid biosynthesis; L-valine biosynthesis; L-valine from pyruvate: step 2/4. Involved in the biosynthesis of branched-chain amino acids (BCAA). Catalyzes an alkyl-migration followed by a ketol-acid reduction of (S)-2-acetolactate (S2AL) to yield (R)-2,3-dihydroxy-isovalerate. In the isomerase reaction, S2AL is rearranged via a Mg-dependent methyl migration to produce 3-hydroxy-3-methyl-2-ketobutyrate (HMKB). In the reductase reaction, this 2-ketoacid undergoes a metal-dependent reduction by NADPH to yield (R)-2,3-dihydroxy-isovalerate. The protein is Ketol-acid reductoisomerase (NADP(+)) of Paraburkholderia phytofirmans (strain DSM 17436 / LMG 22146 / PsJN) (Burkholderia phytofirmans).